Reading from the N-terminus, the 392-residue chain is Succinyl-diaminopimelate desuccinylase (392 aa).

Residue H75 coordinates Zn(2+). D77 is a catalytic residue. A Zn(2+)-binding site is contributed by D108. E147 (proton acceptor) is an active-site residue. Zn(2+) contacts are provided by E148, E176, and H365.

Belongs to the peptidase M20A family. DapE subfamily. As to quaternary structure, homodimer. Requires Zn(2+) as cofactor. It depends on Co(2+) as a cofactor.

It catalyses the reaction N-succinyl-(2S,6S)-2,6-diaminopimelate + H2O = (2S,6S)-2,6-diaminopimelate + succinate. The protein operates within amino-acid biosynthesis; L-lysine biosynthesis via DAP pathway; LL-2,6-diaminopimelate from (S)-tetrahydrodipicolinate (succinylase route): step 3/3. Its function is as follows. Catalyzes the hydrolysis of N-succinyl-L,L-diaminopimelic acid (SDAP), forming succinate and LL-2,6-diaminopimelate (DAP), an intermediate involved in the bacterial biosynthesis of lysine and meso-diaminopimelic acid, an essential component of bacterial cell walls. The protein is Succinyl-diaminopimelate desuccinylase of Rhodopseudomonas palustris (strain BisB18).